The following is a 53-amino-acid chain: Zinc metalloproteinase-disintegrin-like alborhagin (53 aa).

This sequence belongs to the venom metalloproteinase (M12B) family. P-III subfamily. P-IIIb sub-subfamily. Monomer. It depends on Zn(2+) as a cofactor. In terms of processing, contains numerous disulfide bonds. Glycosylated. In terms of tissue distribution, expressed by the venom gland.

Its subcellular location is the secreted. Alborhagin-induced platelet aggregation, but not shape change, is inhibited by EDTA, suggesting that the platelet activation (shape change) is independent of divalent cation or metalloproteinase activity. In terms of biological role, induces platelet activation and glycoprotein VI (GP6)-dependent platelet aggregation. Induces ectodomain cleavage of GP6 by activating endogenous platelet metalloproteinases (probably ADAM10). Has fibrinogenolytic activity against the alpha chain of fibrinogen (FGA). Recognizes distinct binding sites as convulxin, since alborhagin has minimal effect on convulxin binding to GPVI-expressing cells. Its function is as follows. Disintegrin alborhagin-C: 42 kDa fragment of alborhagin autoproteolysed that does not show platelet activation. The polypeptide is Zinc metalloproteinase-disintegrin-like alborhagin (Trimeresurus albolabris (White-lipped pit viper)).